Reading from the N-terminus, the 221-residue chain is Small ribosomal subunit protein eS8 (221 aa).

Disordered regions lie at residues 1–41 (MGIS…LSSN) and 128–169 (TPAA…TLDP). Residues 8–26 (MHKRRATGGKQKAWRKKRK) are compositionally biased toward basic residues. Residues 146-169 (EETKKSNHVTRKLEKRKEGRTLDP) are compositionally biased toward basic and acidic residues.

It belongs to the eukaryotic ribosomal protein eS8 family.

The sequence is that of Small ribosomal subunit protein eS8 (RPS8) from Zea mays (Maize).